A 322-amino-acid chain; its full sequence is NADH-quinone oxidoreductase subunit H (322 aa).

The next 9 membrane-spanning stretches (helical) occupy residues 15–35 (FFKV…LSIV), 50–69 (NRVG…KILF), 81–101 (FIFV…IPII), 114–134 (IGIL…LFAG), 149–169 (ACVQ…GVVA), 186–206 (IWNV…GLAV), 237–257 (FFIG…TLFF), 265–285 (IPGC…FILI), and 302–322 (WKFC…LILV).

The protein belongs to the complex I subunit 1 family. In terms of assembly, NDH-1 is composed of 13 different subunits. Subunits NuoA, H, J, K, L, M, N constitute the membrane sector of the complex.

The protein resides in the cell membrane. The catalysed reaction is a quinone + NADH + 5 H(+)(in) = a quinol + NAD(+) + 4 H(+)(out). In terms of biological role, NDH-1 shuttles electrons from NADH, via FMN and iron-sulfur (Fe-S) centers, to quinones in the respiratory chain. The immediate electron acceptor for the enzyme in this species is believed to be ubiquinone. Couples the redox reaction to proton translocation (for every two electrons transferred, four hydrogen ions are translocated across the cytoplasmic membrane), and thus conserves the redox energy in a proton gradient. This subunit may bind ubiquinone. In Buchnera aphidicola subsp. Acyrthosiphon pisum (strain 5A), this protein is NADH-quinone oxidoreductase subunit H.